A 370-amino-acid polypeptide reads, in one-letter code: Protein Wnt-1 (370 aa).

The signal sequence occupies residues 1–19 (MRVLALLLAVKAACVLLVS). N-linked (GlcNAc...) asparagine glycosylation is present at Asn28. 5 disulfides stabilise this stretch: Cys92-Cys103, Cys142-Cys150, Cys152-Cys169, Cys217-Cys231, and Cys219-Cys226. The O-palmitoleoyl serine; by PORCN moiety is linked to residue Ser223. Positions 261-282 (GSNRASHRADPRHLEPENPAHK) are disordered. A compositionally biased stretch (basic and acidic residues) spans 267–280 (HRADPRHLEPENPA). 6 cysteine pairs are disulfide-bonded: Cys299–Cys330, Cys315–Cys325, Cys329–Cys369, Cys345–Cys360, Cys347–Cys357, and Cys352–Cys353. N-linked (GlcNAc...) asparagine glycosylation occurs at Asn316. N-linked (GlcNAc...) asparagine glycosylation is present at Asn359.

The protein belongs to the Wnt family. Palmitoleoylation is required for efficient binding to frizzled receptors. Palmitoleoylation is necessary for proper trafficking to cell surface. Depalmitoleoylated by NOTUM, leading to inhibit Wnt signaling pathway.

Its subcellular location is the secreted. It localises to the extracellular space. It is found in the extracellular matrix. In terms of biological role, ligand for members of the frizzled family of seven transmembrane receptors. Acts in the canonical Wnt signaling pathway by promoting beta-catenin-dependent transcriptional activation. Involved in neurogenesis. Performs a partially redundant function with wnt10b in the formation of the midbrain-hindbrain boundary (MHB) organizer. In the hindbrain, mediates lateral inhibition of boundary cell specification, probably via up-regulation of proneural and Delta gene expression in non-boundary cells; localized expression of wnt1 in boundary cells is maintained via rfng-mediated modulation of Notch activity. In Danio rerio (Zebrafish), this protein is Protein Wnt-1 (wnt1).